A 59-amino-acid polypeptide reads, in one-letter code: Large ribosomal subunit protein uL30 (59 aa).

It belongs to the universal ribosomal protein uL30 family. As to quaternary structure, part of the 50S ribosomal subunit.

The sequence is that of Large ribosomal subunit protein uL30 from Shewanella amazonensis (strain ATCC BAA-1098 / SB2B).